A 481-amino-acid chain; its full sequence is UDP-glycosyltransferase 72E2 (481 aa).

His18 acts as the Proton acceptor in catalysis. His18 contacts an anthocyanidin. The active-site Charge relay is Asp111. UDP-alpha-D-glucose-binding residues include Ala346, Gln348, His363, Trp366, Ser368, and Glu371. Position 386 (Ala386) interacts with an anthocyanidin. Residues Glu387 and Gln388 each coordinate UDP-alpha-D-glucose.

This sequence belongs to the UDP-glycosyltransferase family. In terms of tissue distribution, expressed in seedlings and roots.

The enzyme catalyses (E)-4-coumarate + UDP-alpha-D-glucose = 4-O-(beta-D-glucosyl)-trans-4-coumarate + UDP + H(+). It carries out the reaction (E)-coniferol + UDP-alpha-D-glucose = 4-O-(beta-D-glucosyl)-(E)-coniferol + UDP + H(+). It catalyses the reaction (E)-sinapyl alcohol + UDP-alpha-D-glucose = 4-O-(beta-D-glucosyl)-trans-4-sinapoyl alcohol + UDP + H(+). The catalysed reaction is (E)-sinapate + UDP-alpha-D-glucose = 4-O-(beta-D-glucosyl)-trans-sinapate + UDP + H(+). The enzyme catalyses (E)-coniferaldehyde + UDP-alpha-D-glucose = 4-O-(beta-D-glucosyl)-4-(E)-coniferyl aldehyde + UDP + H(+). It carries out the reaction (E)-sinapaldehyde + UDP-alpha-D-glucose = 4-O-(beta-D-glucosyl)-4-trans-sinapoyl aldehyde + UDP + H(+). In terms of biological role, involved in the O-glucosylation of monolignols (alcohol monomers of lignin). Glucosylates coniferyl alcohol to form coniferyl alcohol 4-O-glucoside. Glucosylates sinapyl alcohol to form sinapyl alcohol 4-O-glucoside. Glucosylates coniferyl aldehyde to form coniferyl aldehyde 4-O-glucoside. Glucosylates sinapyl aldehyde to form sinapyl aldehyde 4-O-glucoside. Possesses low activity with sinapate and ferulate as substrates. The sequence is that of UDP-glycosyltransferase 72E2 from Arabidopsis thaliana (Mouse-ear cress).